A 152-amino-acid chain; its full sequence is Zinc finger SWIM domain-containing protein 7 (152 aa).

An SWIM-type zinc finger spans residues 76-114 (YTCLASCHYCSCPAFSFSVLRKSDSLLCKHLLAIYLSQL).

Belongs to the SWS1 family. Interacts with RAD51D and XRCC3; involved in homologous recombination repair. Interacts with SWSAP1; they form a functional complex involved in homologous recombination repair and stabilize each other.

The protein localises to the nucleus. In terms of biological role, involved in early stages of the homologous recombination repair (HRR) pathway of double-stranded DNA breaks arising during DNA replication or induced by DNA-damaging agents. Required for meiotic progression, hence for fertility. In Mus musculus (Mouse), this protein is Zinc finger SWIM domain-containing protein 7 (Zswim7).